A 265-amino-acid polypeptide reads, in one-letter code: Synaptoporin (265 aa).

The Cytoplasmic portion of the chain corresponds to 1 to 4; sequence MCMV. The MARVEL domain occupies 1–202; sequence MCMVIFAPLF…NIWFVFKETG (202 aa). Residues 5–25 traverse the membrane as a helical segment; the sequence is IFAPLFAMFAFATCGGYSGGL. At 26–81 the chain is on the vesicular side; sequence RLSVDCVNKTESNLSIDIAFAYPFRLQQVTFEVPTCEGKEQQKLALVGDSSSSAEF. Asparagine 33 and asparagine 38 each carry an N-linked (GlcNAc...) asparagine glycan. The helical transmembrane segment at 82–102 threads the bilayer; that stretch reads FVTVAVFAFLYSLAATVVYIF. Residues 103-114 are Cytoplasmic-facing; that stretch reads FQNKYRENNRGP. A helical membrane pass occupies residues 115–135; that stretch reads LIDFIVTVVFSFLWLVGSSAW. Topologically, residues 136 to 177 are vesicular; that stretch reads AKGLSDVKVATDPKEVLLLMSACKQPSNKCMAVHSPVMSSLN. The helical transmembrane segment at 178 to 198 threads the bilayer; the sequence is TSVVFGFLNFILWAGNIWFVF. Topologically, residues 199 to 265 are cytoplasmic; it reads KETGWHSSGQ…SGPTSFNNQI (67 aa). Repeat copies occupy residues 210–214, 222–226, 227–231, 232–236, and 238–242. The 5 X approximate repeats stretch occupies residues 210–242; that stretch reads YLSDPMEKHSSSYNQGRYNQESYGSSGGYSQQA. Serine 212 carries the phosphoserine modification. Residues 221–230 show a composition bias toward polar residues; sequence SYNQGRYNQE. A disordered region spans residues 221 to 265; it reads SYNQGRYNQESYGSSGGYSQQANLGPTSDEFGQQPSGPTSFNNQI. Residues 240–265 are compositionally biased toward polar residues; that stretch reads QQANLGPTSDEFGQQPSGPTSFNNQI.

It belongs to the synaptophysin/synaptobrevin family.

The protein localises to the cytoplasmic vesicle. The protein resides in the secretory vesicle. It localises to the synaptic vesicle membrane. It is found in the synapse. Its subcellular location is the synaptosome. In terms of biological role, intrinsic membrane protein of small synaptic vesicles. Probable vesicular channel protein. In Mus musculus (Mouse), this protein is Synaptoporin (Synpr).